Here is an 848-residue protein sequence, read N- to C-terminus: DIS3-like exonuclease 2 (848 aa).

A disordered region spans residues 153–173 (KGDRNSGKTDNNSPNKTEKRC). Asp345 and Asp354 together coordinate Mg(2+).

This sequence belongs to the RNR ribonuclease family. DIS3L2 subfamily. Mg(2+) serves as cofactor. It depends on Mn(2+) as a cofactor. Cleaved by caspase ced-3 in vitro.

The protein resides in the cytoplasm. It localises to the P-body. Functionally, 3'-5'-exoribonuclease that specifically recognizes RNAs polyuridylated at their 3' end and mediates their degradation. Component of an exosome-independent RNA degradation pathway that mediates degradation of cytoplasmic mRNAs that have been deadenylated and subsequently uridylated at their 3'. The protein is DIS3-like exonuclease 2 of Caenorhabditis elegans.